A 938-amino-acid chain; its full sequence is MSTMRLLTLALLFSCSVARAACDPKIVNIGAVLSTRKHEQMFREAVNQANKRHGSWKIQLNATSVTHKPNAIQMALSVCEDLISSQVYAILVSHPPTPNDHFTPTPVSYTAGFYRIPVLGLTTRMSIYSDKSIHLSFLRTVPPYSHQSSVWFEMMRVYSWNHIILLVSDDHEGRAAQKRLETLLEERESKAEKVLQFDPGTKNVTALLMEAKELEARVIILSASEDDAATVYRAAAMLNMTGSGYVWLVGEREISGNALRYAPDGILGLQLINGKNESAHISDAVGVVAQAVHELLEKENITDPPRGCVGNTNIWKTGPLFKRVLMSSKYADGVTGRVEFNEDGDRKFANYSIMNLQNRKLVQVGIYNGTHVIPNDRKIIWPGGETEKPRGYQMSTRLKIVTIHQEPFVYVKPTLSDGTCKEEFTVNGDPVKKVICTGPNDTSPGSPRHTVPQCCYGFCIDLLIKLARTMNFTYEVHLVADGKFGTQERVNNSNKKEWNGMMGELLSGQADMIVAPLTINNERAQYIEFSKPFKYQGLTILVKKEIPRSTLDSFMQPFQSTLWLLVGLSVHVVAVMLYLLDRFSPFGRFKVNSEEEEEDALTLSSAMWFSWGVLLNSGIGEGAPRSFSARILGMVWAGFAMIIVASYTANLAAFLVLDRPEERITGINDPRLRNPSDKFIYATVKQSSVDIYFRRQVELSTMYRHMEKHNYESAAEAIQAVRDNKLHAFIWDSAVLEFEASQKCDLVTTGELFFRSGFGIGMRKDSPWKQNVSLSILKSHENGFMEDLDKTWVRYQECDSRSNAPATLTFENMAGVFMLVAGGIVAGIFLIFIEIAYKRHKDARRKQMQLAFAAVNVWRKNLQDRKSGRAEPDPKKKATFRAITSTLASSFKRRRSSKDTSTGGGRGALQNQKDTVLPRRAIEREEGQLQLCSRHRES.

A signal peptide spans 1-18 (MSTMRLLTLALLFSCSVA). The Extracellular portion of the chain corresponds to 19 to 559 (RAACDPKIVN…TLDSFMQPFQ (541 aa)). 10 N-linked (GlcNAc...) asparagine glycosylation sites follow: asparagine 61, asparagine 203, asparagine 239, asparagine 276, asparagine 300, asparagine 350, asparagine 368, asparagine 440, asparagine 471, and asparagine 491. A disulfide bond links cysteine 79 and cysteine 308. 2 cysteine pairs are disulfide-bonded: cysteine 420–cysteine 454 and cysteine 436–cysteine 455. The glycine site is built by proline 516, threonine 518, and arginine 523. The helical transmembrane segment at 560–580 (STLWLLVGLSVHVVAVMLYLL) threads the bilayer. Topologically, residues 581–604 (DRFSPFGRFKVNSEEEEEDALTLS) are cytoplasmic. The pore-forming stretch occupies residues 603–624 (LSSAMWFSWGVLLNSGIGEGAP). An intramembrane region (discontinuously helical) is located at residues 605–615 (SAMWFSWGVLL). Over 616 to 627 (NSGIGEGAPRSF) the chain is Cytoplasmic. Residues 628-648 (SARILGMVWAGFAMIIVASYT) traverse the membrane as a helical segment. The Extracellular segment spans residues 649-811 (ANLAAFLVLD…SNAPATLTFE (163 aa)). Asparagine 674 is a glycosylation site (N-linked (GlcNAc...) asparagine). The glycine site is built by serine 688 and aspartate 732. Cysteine 744 and cysteine 798 are oxidised to a cystine. The N-linked (GlcNAc...) asparagine glycan is linked to asparagine 771. A helical membrane pass occupies residues 812 to 835 (NMAGVFMLVAGGIVAGIFLIFIEI). Residues 836-938 (AYKRHKDARR…LQLCSRHRES (103 aa)) lie on the Cytoplasmic side of the membrane. Serine 889, serine 890, serine 896, and serine 897 each carry phosphoserine; by PKC. The tract at residues 889-938 (SSFKRRRSSKDTSTGGGRGALQNQKDTVLPRRAIEREEGQLQLCSRHRES) is disordered. Basic and acidic residues predominate over residues 916 to 927 (VLPRRAIEREEG).

It belongs to the glutamate-gated ion channel (TC 1.A.10.1) family. NR1/GRIN1 subfamily. Heterotetramer; the NMDAR subunits are modular and harbor tiered domains that function in concert to regulate opening and closing of the cation-selective ion channel pore. Forms heterotetrameric channels composed of two GluN1/zeta subunits (GRIN1), and two identical GluN2/epsilon subunits (GRIN2A, GRIN2B, GRIN2C or GRIN2D) or GluN3 subunits (GRIN3A or GRIN3B) (in vitro). Can also form heterotetrameric channels that contain at least two GluN1 subunits and at least two different GluN2 subunits (or a combination of one GluN2 and one GluN3 subunits) (in vitro). In vivo, the subunit composition may vary in function of the expression levels of the different subunits. Found in a complex with GRIN2A or GRIN2B, GRIN3A and PPP2CB. Found in a complex with GRIN2A or GRIN2B and GRIN3B. Interacts with SNX27 (via PDZ domain); the interaction is required for recycling to the plasma membrane when endocytosed and prevent degradation in lysosomes. Interacts with DLG4 and MPDZ. Interacts with LRFN1 and LRFN2. Interacts with MYZAP. Found in a complex with DLG4 and PRR7. Found in a complex with GRIN2B and PRR7. Interacts with PRR7; the interaction is reduced following NMDA receptor activity. In terms of processing, NMDA is probably regulated by C-terminal phosphorylation of an isoform of GRIN1 by PKC. Dephosphorylated on Ser-897 probably by protein phosphatase 2A (PPP2CB). Its phosphorylated state is influenced by the formation of the NMDAR-PPP2CB complex and the NMDAR channel activity.

The protein resides in the cell membrane. It localises to the postsynaptic cell membrane. Its subcellular location is the postsynaptic density membrane. It is found in the synaptic cell membrane. It carries out the reaction Ca(2+)(in) = Ca(2+)(out). The catalysed reaction is Na(+)(in) = Na(+)(out). It catalyses the reaction K(+)(in) = K(+)(out). With respect to regulation, NMDA glutamate receptor activity is inhbited by Mg2(+) in a voltage-dependent manner; Mg2(+)-induced blockade occurs only at negative potentials and decreases with membrane depolarization. 7-chlorokynurenate (50 uM) or Zn2(+) (100 uM) partially inhibit the NMDA glutamate receptor activity, while acide 2-amino-5-phosphonovalerique(100 uM) almost completely blocked the NMDA glutamate receptor activity. Dizocilpine (1 uM) results in long lasting and almost complete block of the NMDA glutamate receptor activity. Component of N-methyl-D-aspartate (NMDA) receptors (NMDARs) that function as heterotetrameric, ligand-gated cation channels with high calcium permeability and voltage-dependent block by Mg(2+). NMDARs participate in synaptic plasticity for learning and memory formation by contributing to the long-term potentiation (LTP). Channel activation requires binding of the neurotransmitter L-glutamate to the GluN2 subunit, glycine or D-serine binding to the GluN1 subunit, plus membrane depolarization to eliminate channel inhibition by Mg(2+). NMDARs mediate simultaneously the potasium efflux and the influx of calcium and sodium. Each GluN2 or GluN3 subunit confers differential attributes to channel properties, including activation, deactivation and desensitization kinetics, pH sensitivity, Ca2(+) permeability, and binding to allosteric modulators. The polypeptide is Glutamate receptor ionotropic, NMDA 1 (Homo sapiens (Human)).